A 148-amino-acid chain; its full sequence is Snaclec 3 (148 aa).

The signal sequence occupies residues 1-23; sequence MGRFISVSFGLLVVFLSLSGTEA. 3 disulfides stabilise this stretch: Cys-27–Cys-38, Cys-55–Cys-144, and Cys-121–Cys-136. A C-type lectin domain is found at 34–145; that stretch reads YDQNCYKVFT…CSSTHNFVCK (112 aa).

Belongs to the snaclec family. Heterodimer; disulfide-linked.

Its subcellular location is the secreted. Its function is as follows. Interferes with one step of hemostasis (modulation of platelet aggregation, or coagulation cascade, for example). This is Snaclec 3 from Daboia siamensis (Eastern Russel's viper).